The sequence spans 132 residues: Mini-ribonuclease 3 (132 aa).

D17 is a catalytic residue.

Belongs to the MrnC RNase family. Homodimer. Mg(2+) serves as cofactor.

The protein localises to the cytoplasm. Involved in correct processing of both the 5' and 3' ends of 23S rRNA precursor. Processes 30S rRNA precursor transcript even in absence of ribonuclease 3 (Rnc); Rnc processes 30S rRNA into smaller rRNA precursors. The chain is Mini-ribonuclease 3 from Enterococcus faecalis (strain ATCC 700802 / V583).